The following is a 206-amino-acid chain: Small ribosomal subunit protein uS4 (206 aa).

An S4 RNA-binding domain is found at 96 to 157 (CRLDNVVYRM…KCRNQLRIAQ (62 aa)).

Belongs to the universal ribosomal protein uS4 family. Part of the 30S ribosomal subunit. Contacts protein S5. The interaction surface between S4 and S5 is involved in control of translational fidelity.

Its function is as follows. One of the primary rRNA binding proteins, it binds directly to 16S rRNA where it nucleates assembly of the body of the 30S subunit. In terms of biological role, with S5 and S12 plays an important role in translational accuracy. The sequence is that of Small ribosomal subunit protein uS4 from Stutzerimonas stutzeri (strain A1501) (Pseudomonas stutzeri).